Here is a 485-residue protein sequence, read N- to C-terminus: Glutamyl-tRNA(Gln) amidotransferase subunit A (485 aa).

Catalysis depends on charge relay system residues lysine 78 and serine 153. Serine 177 functions as the Acyl-ester intermediate in the catalytic mechanism.

This sequence belongs to the amidase family. GatA subfamily. Heterotrimer of A, B and C subunits.

It carries out the reaction L-glutamyl-tRNA(Gln) + L-glutamine + ATP + H2O = L-glutaminyl-tRNA(Gln) + L-glutamate + ADP + phosphate + H(+). Its function is as follows. Allows the formation of correctly charged Gln-tRNA(Gln) through the transamidation of misacylated Glu-tRNA(Gln) in organisms which lack glutaminyl-tRNA synthetase. The reaction takes place in the presence of glutamine and ATP through an activated gamma-phospho-Glu-tRNA(Gln). The chain is Glutamyl-tRNA(Gln) amidotransferase subunit A from Bacillus cereus (strain ZK / E33L).